A 581-amino-acid polypeptide reads, in one-letter code: Meiotic PUF family protein 1 (581 aa).

The 356-residue stretch at 225–580 folds into the PUM-HD domain; that stretch reads FPNGTTEPFE…RIAALVEKSK (356 aa). Pumilio repeat units lie at residues 291 to 326, 327 to 362, 363 to 398, 403 to 438, 439 to 474, 475 to 510, 518 to 554, and 555 to 581; these read TILP…SFSY, FLKK…NLIE, ELIE…GIFD, KMQG…TCLD, EIIN…RILN, SLLK…RYVK, ELPT…LMAE, and HLKK…KSKS.

Its function is as follows. RNA-binding protein essential for meiotic progression. The chain is Meiotic PUF family protein 1 (mpf1) from Schizosaccharomyces pombe (strain 972 / ATCC 24843) (Fission yeast).